A 692-amino-acid polypeptide reads, in one-letter code: Catalase-B (692 aa).

Active-site residues include H69 and N142. Y356 serves as a coordination point for heme.

This sequence belongs to the catalase family. It depends on heme as a cofactor.

Its subcellular location is the cytoplasm. The enzyme catalyses 2 H2O2 = O2 + 2 H2O. In terms of biological role, occurs in almost all aerobically respiring organisms and serves to protect cells from the toxic effects of hydrogen peroxide. Its accumulation in prespore cells affords the spores protection from oxidation during prolonged dormancy. Required for normal developmental timing, possibly through a regulatory role in differentiation and morphogenesis. In Dictyostelium discoideum (Social amoeba), this protein is Catalase-B (catB).